A 1058-amino-acid chain; its full sequence is Structural maintenance of chromosomes protein 6A (1058 aa).

One can recognise a Zinc-hook domain in the interval 23–1049 (ILRIRLENFM…SMVKSHEKIK (1027 aa)). 50-57 (GQNGSGKS) is a binding site for ATP. Positions 136-449 (KISSRKEELR…NDLKKHQTNK (314 aa)) form a coiled coil. A flexible hinge region spans residues 450-633 (VTAFGGDKVI…PPRPRRPTRL (184 aa)). A coiled-coil region spans residues 634 to 927 (CASFDDQIKD…RNKDLLKREL (294 aa)).

Belongs to the SMC family. SMC6 subfamily. In terms of assembly, forms a heterodimer with SMC5. The SMC5-SMC6 complex is composed of the SMC5 and SMC6 heterodimer attached via their hinge domain and from the non-SMC subunit NSE4A or NSE4B. As to expression, expressed in seedlings, rosette leaves and floral buds.

It localises to the nucleus. It is found in the chromosome. Core component of the SMC5-SMC6 complex that promotes sister chromatid alignment after DNA damage and facilitates double-stranded DNA breaks (DSBs) repair via homologous recombination between sister chromatids. This chain is Structural maintenance of chromosomes protein 6A (SMC6A), found in Arabidopsis thaliana (Mouse-ear cress).